The primary structure comprises 100 residues: NADH-quinone oxidoreductase subunit K (100 aa).

A run of 3 helical transmembrane segments spans residues 4-24, 28-48, and 60-80; these read TTWV…GLLS, LLFI…LFIA, and IMYL…LALV.

This sequence belongs to the complex I subunit 4L family. In terms of assembly, NDH-1 is composed of 13 different subunits. Subunits NuoA, H, J, K, L, M, N constitute the membrane sector of the complex.

It localises to the cell inner membrane. The enzyme catalyses a quinone + NADH + 5 H(+)(in) = a quinol + NAD(+) + 4 H(+)(out). Its function is as follows. NDH-1 shuttles electrons from NADH, via FMN and iron-sulfur (Fe-S) centers, to quinones in the respiratory chain. The immediate electron acceptor for the enzyme in this species is believed to be ubiquinone. Couples the redox reaction to proton translocation (for every two electrons transferred, four hydrogen ions are translocated across the cytoplasmic membrane), and thus conserves the redox energy in a proton gradient. This Shewanella woodyi (strain ATCC 51908 / MS32) protein is NADH-quinone oxidoreductase subunit K.